The primary structure comprises 65 residues: Seminal plasma acrosin inhibitor A1 (65 aa).

The 59-residue stretch at threonine 1–glutamate 59 folds into the Kazal-like domain. 3 disulfides stabilise this stretch: cysteine 7/cysteine 39, cysteine 17/cysteine 36, and cysteine 25/cysteine 57. O-linked (GalNAc...) serine glycosylation occurs at serine 12. Serine 62 carries an O-linked (GalNAc...) serine glycan.

Post-translationally, the identity of the O-linked saccharides are not reported in Ref.1. The O-linked polysaccharides on Ser-12 and Ser-62 are probably the mucin type linked to GalNAc. As to expression, seminal plasma.

The protein localises to the secreted. Its function is as follows. Inhibits acrosin. The polypeptide is Seminal plasma acrosin inhibitor A1 (Sus scrofa (Pig)).